The following is an 810-amino-acid chain: Plasminogen (810 aa).

Residues 1 to 19 (MEHKEVVLLLLLFLKSGQG) form the signal peptide. Residues 20–98 (EPLDDYVNTK…RDVVLFEKKV (79 aa)) enclose the PAN domain. Intrachain disulfides connect cysteine 49-cysteine 73, cysteine 53-cysteine 61, cysteine 103-cysteine 181, cysteine 124-cysteine 164, cysteine 152-cysteine 176, cysteine 185-cysteine 262, cysteine 188-cysteine 316, cysteine 206-cysteine 245, cysteine 234-cysteine 257, cysteine 275-cysteine 352, cysteine 296-cysteine 335, and cysteine 324-cysteine 347. Kringle domains are found at residues 103–181 (CKTG…IPEC), 184–262 (ECMH…IPRC), and 275–352 (CLKG…IPSC). The segment covering 125 to 141 (QKWSSTSPHRPTFSPAT) has biased composition (polar residues). Residues 125–145 (QKWSSTSPHRPTFSPATHPSE) form a disordered region. Residues threonine 136, aspartate 158, and arginine 172 each coordinate L-lysine. O-linked (GalNAc...) threonine glycosylation is present at threonine 365. 9 disulfides stabilise this stretch: cysteine 377–cysteine 454, cysteine 398–cysteine 437, cysteine 426–cysteine 449, cysteine 481–cysteine 560, cysteine 502–cysteine 543, cysteine 531–cysteine 555, cysteine 567–cysteine 685, cysteine 577–cysteine 585, and cysteine 607–cysteine 623. Kringle domains are found at residues 377–454 (CYHG…LKKC) and 481–560 (CMFG…VPQC). Residues aspartate 432 and arginine 445 each contribute to the L-lysine site. Residues 581 to 808 (VVGGCVAYPH…FVTWIEGVMR (228 aa)) enclose the Peptidase S1 domain. Residue serine 597 is modified to Phosphoserine. Active-site charge relay system residues include histidine 622 and aspartate 665. A Phosphoserine modification is found at serine 688. Intrachain disulfides connect cysteine 699-cysteine 766, cysteine 729-cysteine 745, and cysteine 756-cysteine 784. Catalysis depends on serine 760, which acts as the Charge relay system.

This sequence belongs to the peptidase S1 family. Plasminogen subfamily. Interacts with CSPG4 and AMOT. Interacts (via the Kringle domains) with HRG; the interaction tethers PLG to the cell surface and enhances its activation. Interacts (via Kringle 4 domain) with ADA; the interaction stimulates PLG activation when in complex with DPP4. Angiostatin: Interacts with ATP5F1A; the interaction inhibits most of the angiogenic effects of angiostatin. In terms of processing, in the presence of the inhibitor, the activation involves only cleavage after Arg-580, yielding two chains held together by two disulfide bonds. In the absence of the inhibitor, the activation involves additionally the removal of the activation peptide.

The protein resides in the secreted. It carries out the reaction Preferential cleavage: Lys-|-Xaa &gt; Arg-|-Xaa, higher selectivity than trypsin. Converts fibrin into soluble products.. With respect to regulation, converted into plasmin by plasminogen activators, both plasminogen and its activator being bound to fibrin. Activated with catalytic amounts of streptokinase. In terms of biological role, plasmin dissolves the fibrin of blood clots and acts as a proteolytic factor in a variety of other processes including embryonic development, tissue remodeling, tumor invasion, and inflammation. In ovulation, weakens the walls of the Graafian follicle. It activates the urokinase-type plasminogen activator, collagenases and several complement zymogens, such as C1, C4 and C5. Cleavage of fibronectin and laminin leads to cell detachment and apoptosis. Also cleaves fibrin, thrombospondin and von Willebrand factor. Its role in tissue remodeling and tumor invasion may be modulated by CSPG4. Binds to cells. The protein is Plasminogen (PLG) of Macaca mulatta (Rhesus macaque).